The following is a 455-amino-acid chain: Probable ATP-dependent RNA helicase DDX47 (455 aa).

The segment at Met1 to Glu21 is disordered. An N-acetylalanine modification is found at Ala2. The residue at position 9 (Ser9) is a Phosphoserine. Residues Lys24–Ile52 carry the Q motif motif. The Helicase ATP-binding domain occupies Ile55–Cys226. Ala68–Thr75 lines the ATP pocket. A Phosphothreonine modification is found at Thr149. The DEAD box motif lies at Asp174–Asp177. The Helicase C-terminal domain maps to Lys237 to Met397. Residues Met412 to Arg455 are disordered.

This sequence belongs to the DEAD box helicase family. DDX47/RRP3 subfamily. In terms of assembly, interacts with AGO1 and AGO2. Interacts with GABARAP. Interacts with NOL8; the interaction is RNA-dependent.

It is found in the nucleus. The protein localises to the nucleolus. The catalysed reaction is ATP + H2O = ADP + phosphate + H(+). Involved in apoptosis. May have a role in rRNA processing and mRNA splicing. Associates with pre-rRNA precursors. This is Probable ATP-dependent RNA helicase DDX47 (Ddx47) from Mus musculus (Mouse).